We begin with the raw amino-acid sequence, 93 residues long: Large ribosomal subunit protein bL27 (93 aa).

Positions 1–22 are disordered; sequence MAHKKAGGSSRNGRDSAGRRLG.

The protein belongs to the bacterial ribosomal protein bL27 family.

This is Large ribosomal subunit protein bL27 from Parvibaculum lavamentivorans (strain DS-1 / DSM 13023 / NCIMB 13966).